Consider the following 338-residue polypeptide: Malate dehydrogenase, mitochondrial (338 aa).

Residues 1–24 constitute a mitochondrion transit peptide; sequence MLSALARPAGAALRRSFSTSAQNN. NAD(+) is bound by residues 31-37 and Asp-57; that span reads GASGGIG. O-linked (GlcNAc) serine glycosylation is present at Ser-33. Residues Lys-78 and Lys-91 each carry the N6-acetyllysine; alternate modification. Lys-78 and Lys-91 each carry N6-succinyllysine; alternate. Positions 104 and 110 each coordinate substrate. NAD(+)-binding positions include Asn-117 and 140-142; that span reads IAN. Substrate is bound at residue Asn-142. Lys-165 carries the post-translational modification N6-acetyllysine. Arg-176 contributes to the substrate binding site. Lys-185 bears the N6-acetyllysine; alternate mark. Position 185 is an N6-succinyllysine; alternate (Lys-185). The active-site Proton acceptor is the His-200. N6-succinyllysine is present on Lys-203. 2 positions are modified to N6-acetyllysine; alternate: Lys-215 and Lys-239. 2 positions are modified to N6-succinyllysine; alternate: Lys-215 and Lys-239. At Lys-239 the chain carries N6-malonyllysine; alternate. Phosphoserine is present on Ser-246. NAD(+) is bound at residue Met-251. Residue Lys-269 is modified to N6-succinyllysine. Lys-296, Lys-301, and Lys-307 each carry N6-acetyllysine; alternate. Residues Lys-296, Lys-301, and Lys-307 each carry the N6-succinyllysine; alternate modification. At Lys-307 the chain carries N6-malonyllysine; alternate. Phosphothreonine is present on Thr-309. An N6-acetyllysine; alternate mark is found at Lys-314 and Lys-324. Lys-314 and Lys-324 each carry N6-succinyllysine; alternate. Residue Ser-326 is modified to Phosphoserine. Lys-328, Lys-329, and Lys-335 each carry N6-acetyllysine; alternate. Position 328 is an N6-succinyllysine; alternate (Lys-328). An N6-malonyllysine; alternate modification is found at Lys-329. An N6-succinyllysine; alternate modification is found at Lys-335.

The protein belongs to the LDH/MDH superfamily. MDH type 1 family. In terms of assembly, homodimer. In terms of processing, acetylation is enhanced after treatment either with trichostin A (TCA) or with nicotinamide (NAM) with the appearance of tri- and tetraacetylations. Glucose also increases acetylation. Acetylation of Lys-239 and Lys-314 is observed in liver mitochondria from fasted mice but not from fed mice.

It is found in the mitochondrion matrix. It catalyses the reaction (S)-malate + NAD(+) = oxaloacetate + NADH + H(+). Its activity is regulated as follows. Enzyme activity is enhanced by acetylation. The chain is Malate dehydrogenase, mitochondrial (Mdh2) from Mus musculus (Mouse).